The chain runs to 184 residues: Ribosome maturation factor RimM (184 aa).

The PRC barrel domain occupies 111 to 184 (DDEFYWVDLI…HIVVDWGLDY (74 aa)).

This sequence belongs to the RimM family. As to quaternary structure, binds ribosomal protein uS19.

Its subcellular location is the cytoplasm. Its function is as follows. An accessory protein needed during the final step in the assembly of 30S ribosomal subunit, possibly for assembly of the head region. Essential for efficient processing of 16S rRNA. May be needed both before and after RbfA during the maturation of 16S rRNA. It has affinity for free ribosomal 30S subunits but not for 70S ribosomes. In Ralstonia nicotianae (strain ATCC BAA-1114 / GMI1000) (Ralstonia solanacearum), this protein is Ribosome maturation factor RimM.